A 230-amino-acid chain; its full sequence is Octanoyltransferase (230 aa).

The region spanning Pro40–Leu218 is the BPL/LPL catalytic domain. Substrate is bound by residues Arg82–His89, Ala149–Gly151, and Gly162–Ala164. Cys180 acts as the Acyl-thioester intermediate in catalysis.

This sequence belongs to the LipB family.

The protein resides in the cytoplasm. It catalyses the reaction octanoyl-[ACP] + L-lysyl-[protein] = N(6)-octanoyl-L-lysyl-[protein] + holo-[ACP] + H(+). The protein operates within protein modification; protein lipoylation via endogenous pathway; protein N(6)-(lipoyl)lysine from octanoyl-[acyl-carrier-protein]: step 1/2. Its function is as follows. Catalyzes the transfer of endogenously produced octanoic acid from octanoyl-acyl-carrier-protein onto the lipoyl domains of lipoate-dependent enzymes. Lipoyl-ACP can also act as a substrate although octanoyl-ACP is likely to be the physiological substrate. This chain is Octanoyltransferase, found in Nostoc punctiforme (strain ATCC 29133 / PCC 73102).